The following is a 1269-amino-acid chain: Protein strawberry notch homolog 1 (1269 aa).

Residues Asn21–Pro47 are disordered. Position 113 is an N6-acetyllysine (Lys113). A phosphoserine mark is found at Ser126 and Ser178. Lys377 is subject to N6-acetyllysine. A disordered region spans residues Pro652 to Glu725. Ser656, Ser657, and Ser661 each carry phosphoserine. Positions Ser679–Tyr693 are enriched in acidic residues. 2 positions are modified to phosphoserine: Ser700 and Ser701. The stretch at Thr719 to Pro746 forms a coiled coil. The residue at position 1098 (Lys1098) is an N6-acetyllysine. Residue Ser1262 is modified to Phosphoserine.

The protein belongs to the SBNO family.

The protein resides in the nucleus. Functionally, plays a crucial role in the regulation of neural stem cells (NSCs) proliferation. Enhances the phosphorylation of GSK3B through the PI3K-Akt signaling pathway, thereby upregulating the Wnt/beta-catenin signaling pathway and promoting the proliferation of NSCs. Improves ischemic stroke recovery while inhibiting neuroinflammation through small extracellular vesicles (sEVs)-mediated mechanism. Enhances the secretion of sEVs from NSCs, which in turn inhibit both the MAPK and NF-kappaB pathways in microglia. This inhibition suppresses the pro-inflammatory M1 polarization of microglia, promoting a shift towards the M2 anti-inflammatory phenotype, which is beneficial for reducing neuroinflammation. The polypeptide is Protein strawberry notch homolog 1 (Sbno1) (Rattus norvegicus (Rat)).